We begin with the raw amino-acid sequence, 222 residues long: Small ribosomal subunit protein eS1 (222 aa).

Belongs to the eukaryotic ribosomal protein eS1 family.

This chain is Small ribosomal subunit protein eS1, found in Pyrobaculum calidifontis (strain DSM 21063 / JCM 11548 / VA1).